The sequence spans 217 residues: MOB kinase activator-like 2 (217 aa).

A disordered region spans residues glycine 15–arginine 38. The segment covering tyrosine 23–arginine 38 has biased composition (basic residues). Positions 89, 94, 167, and 172 each coordinate Zn(2+).

Belongs to the MOB1/phocein family.

This chain is MOB kinase activator-like 2 (mob2), found in Dictyostelium discoideum (Social amoeba).